We begin with the raw amino-acid sequence, 557 residues long: Potassium-transporting ATPase potassium-binding subunit (557 aa).

The next 10 helical transmembrane spans lie at 6–26 (IQLLIFLFALLIFSPLFGLGL), 59–79 (ALSLLVFNFFGFLLLFLILFF), 127–147 (AGLTTQNFLSATTGLCVLLAL), 172–192 (LYVLLPLSFIFALFLVGFGVV), 247–267 (ISNFLQMFSILILPGACVFLY), 278–298 (WAIFSVMFTILCVGILIVWTF), 363–383 (IVFGGVGAGMYGMILFVLLTV), 410–430 (ILGILLPSTIILLFTAISVSV), 475–495 (VMIAIAMILGRFGVILPVLVI), and 520–540 (FYILLLSVIIIVGALTFFPVL).

This sequence belongs to the KdpA family. The system is composed of three essential subunits: KdpA, KdpB and KdpC.

The protein resides in the cell inner membrane. Part of the high-affinity ATP-driven potassium transport (or Kdp) system, which catalyzes the hydrolysis of ATP coupled with the electrogenic transport of potassium into the cytoplasm. This subunit binds the periplasmic potassium ions and delivers the ions to the membrane domain of KdpB through an intramembrane tunnel. This Leptospira interrogans serogroup Icterohaemorrhagiae serovar copenhageni (strain Fiocruz L1-130) protein is Potassium-transporting ATPase potassium-binding subunit.